We begin with the raw amino-acid sequence, 240 residues long: 31 kDa outer-membrane immunogenic protein (240 aa).

The signal sequence occupies residues 1-19 (MKSVILASIAAMFATSAMA). The interval 48–83 (NAGYAGGKFKHPFSSFDKEDNEQVSGSLDVTAGGFV) is epitope recognized by the monoclonal antibody A59/10F09/G10.

The protein belongs to the Omp25/RopB family. As to quaternary structure, oligomeric.

Its subcellular location is the cell outer membrane. Functionally, major outer membrane protein associated with peptidoglycans. May function as a porin. The chain is 31 kDa outer-membrane immunogenic protein (omp31) from Brucella melitensis biotype 1 (strain ATCC 23456 / CCUG 17765 / NCTC 10094 / 16M).